The sequence spans 826 residues: Leucine--tRNA ligase (826 aa).

The 'HIGH' region signature appears at 42-52 (PYPSGNLHMGH). Residues 581 to 585 (KMSKS) carry the 'KMSKS' region motif. Lysine 584 serves as a coordination point for ATP.

Belongs to the class-I aminoacyl-tRNA synthetase family.

The protein localises to the cytoplasm. It catalyses the reaction tRNA(Leu) + L-leucine + ATP = L-leucyl-tRNA(Leu) + AMP + diphosphate. The protein is Leucine--tRNA ligase of Desulforudis audaxviator (strain MP104C).